The sequence spans 520 residues: GMP synthase [glutamine-hydrolyzing] (520 aa).

A Glutamine amidotransferase type-1 domain is found at 3–200 (AIAIIDFGSQ…FLDIANCKRD (198 aa)). Residue cysteine 84 is the Nucleophile of the active site. Catalysis depends on residues histidine 175 and glutamate 177. In terms of domain architecture, GMPS ATP-PPase spans 201 to 386 (WTMKSIIEKQ…IGLSNEIIFQ (186 aa)). Position 228-234 (228-234 (SGGVDSS)) interacts with ATP.

As to quaternary structure, homodimer.

The catalysed reaction is XMP + L-glutamine + ATP + H2O = GMP + L-glutamate + AMP + diphosphate + 2 H(+). It participates in purine metabolism; GMP biosynthesis; GMP from XMP (L-Gln route): step 1/1. In terms of biological role, catalyzes the synthesis of GMP from XMP. The polypeptide is GMP synthase [glutamine-hydrolyzing] (Wolbachia sp. subsp. Brugia malayi (strain TRS)).